A 112-amino-acid chain; its full sequence is Nitrogen regulatory protein GlnK2 (112 aa).

ADP-binding positions include T29, 37 to 39 (GVQ), V64, and 87 to 90 (GDGK). ATP is bound by residues T29, 37–39 (GVQ), V64, and 87–90 (GDGK).

The protein belongs to the P(II) protein family. Homotrimer. Interacts and forms a complex with Amt2.

It is found in the cytoplasm. Its function is as follows. Involved in the regulation of nitrogen metabolism. Regulates the activity of its targets by protein-protein interaction in response to the nitrogen status of the cell. Regulates the activity of the ammonia channel Amt2 via direct interaction. The polypeptide is Nitrogen regulatory protein GlnK2 (Methanocaldococcus jannaschii (strain ATCC 43067 / DSM 2661 / JAL-1 / JCM 10045 / NBRC 100440) (Methanococcus jannaschii)).